A 496-amino-acid polypeptide reads, in one-letter code: Adenosylhomocysteinase (496 aa).

3 residues coordinate substrate: Thr-68, Asp-157, and Glu-219. Residue 220–222 participates in NAD(+) binding; the sequence is TTT. The substrate site is built by Lys-249 and Asp-253. NAD(+)-binding positions include Asn-254, 283–288, Glu-306, Asn-341, 362–364, and Asn-410; these read GYGDVG and IGH.

It belongs to the adenosylhomocysteinase family. It depends on NAD(+) as a cofactor.

Its subcellular location is the cytoplasm. It carries out the reaction S-adenosyl-L-homocysteine + H2O = L-homocysteine + adenosine. It participates in amino-acid biosynthesis; L-homocysteine biosynthesis; L-homocysteine from S-adenosyl-L-homocysteine: step 1/1. Its function is as follows. May play a key role in the regulation of the intracellular concentration of adenosylhomocysteine. In Mycolicibacterium paratuberculosis (strain ATCC BAA-968 / K-10) (Mycobacterium paratuberculosis), this protein is Adenosylhomocysteinase.